A 36-amino-acid chain; its full sequence is Pancreatic polypeptide (36 aa).

Residue Y36 is modified to Tyrosine amide.

The protein belongs to the NPY family.

The protein localises to the secreted. Hormone secreted by pancreatic cells that acts as a regulator of pancreatic and gastrointestinal functions probably by signaling through the G protein-coupled receptor NPY4R2. This chain is Pancreatic polypeptide (PPY), found in Chinchilla chinchilla (Short-tailed chinchilla).